Here is a 245-residue protein sequence, read N- to C-terminus: Type II restriction enzyme MjaIV (245 aa).

The enzyme catalyses Endonucleolytic cleavage of DNA to give specific double-stranded fragments with terminal 5'-phosphates.. In terms of biological role, a P subtype restriction enzyme that recognizes the double-stranded sequence 5'-GTNNAC-3'; the cleavage site is unknown. This Methanocaldococcus jannaschii (strain ATCC 43067 / DSM 2661 / JAL-1 / JCM 10045 / NBRC 100440) (Methanococcus jannaschii) protein is Type II restriction enzyme MjaIV (mjaIVR).